The following is a 238-amino-acid chain: Thymidine kinase a (238 aa).

Residues 38–45 (GPMFSGKS), 70–72 (DTR), and 115–118 (DEAQ) each bind ATP. Glutamate 116 functions as the Proton acceptor in the catalytic mechanism. Residue tyrosine 147 coordinates substrate. Positions 172 and 175 each coordinate Zn(2+). Substrate-binding positions include 191 to 195 (TELIG) and tyrosine 200. Cysteine 204 is a Zn(2+) binding site.

The protein belongs to the thymidine kinase family. Monomer and dimer. Dimerization is stimulated by ATP. In terms of tissue distribution, expressed ubiquitously.

The protein resides in the cytoplasm. It catalyses the reaction thymidine + ATP = dTMP + ADP + H(+). It functions in the pathway purine metabolism. Its pathway is pyrimidine metabolism. Functionally, part of the salvage pathway for purine and pyrimidine deoxyribonucleotide synthesis. Phosphorylates preferentially purines over pyrimidines. Mediates tolerance to genotoxins, such as ultraviolet-C (UV-C) irradiation, MMC, a DNA crosslinker, and ZEO, a DNA intercalator, that induce double-strand breaks and thus contributes to several DNA repair pathways by providing deoxythymidine triphosphate that serve as precursors for DNA repair and to balance deoxyribonucleotides pools. This Arabidopsis thaliana (Mouse-ear cress) protein is Thymidine kinase a.